The following is a 104-amino-acid chain: Flagellar hook-basal body complex protein FliE (104 aa).

This sequence belongs to the FliE family.

The protein localises to the bacterial flagellum basal body. The polypeptide is Flagellar hook-basal body complex protein FliE (Edwardsiella ictaluri (strain 93-146)).